A 292-amino-acid chain; its full sequence is Shikimate dehydrogenase (NADP(+)) (292 aa).

Shikimate contacts are provided by residues 25–27 and T72; that span reads SKS. K76 functions as the Proton acceptor in the catalytic mechanism. The shikimate site is built by N97 and D113. Residues 137–141, 161–166, and M230 contribute to the NADP(+) site; these read GAGGA and NRTQSK. Y232 provides a ligand contact to shikimate. Residue G254 participates in NADP(+) binding.

The protein belongs to the shikimate dehydrogenase family. As to quaternary structure, homodimer.

It carries out the reaction shikimate + NADP(+) = 3-dehydroshikimate + NADPH + H(+). Its pathway is metabolic intermediate biosynthesis; chorismate biosynthesis; chorismate from D-erythrose 4-phosphate and phosphoenolpyruvate: step 4/7. Involved in the biosynthesis of the chorismate, which leads to the biosynthesis of aromatic amino acids. Catalyzes the reversible NADPH linked reduction of 3-dehydroshikimate (DHSA) to yield shikimate (SA). The polypeptide is Shikimate dehydrogenase (NADP(+)) (Shewanella sp. (strain MR-4)).